Here is a 253-residue protein sequence, read N- to C-terminus: E3 ubiquitin-protein ligase MARCHF3 (253 aa).

The segment at 63-123 (SPFNDRPMCR…ELCHFRFAVE (61 aa)) adopts an RING-CH-type zinc-finger fold. 8 residues coordinate Zn(2+): C71, C74, C87, C89, H97, C100, C113, and C116. Transmembrane regions (helical) follow at residues 145–165 (LFGD…SGWL) and 182–202 (AVGL…WTLV). Phosphoserine occurs at positions 237 and 243.

As to quaternary structure, interacts with MARCHF2 and STX6. In terms of tissue distribution, expressed predominantly in lung, colon and spleen. Present in liver (at protein level).

It is found in the cytoplasmic vesicle membrane. It localises to the early endosome membrane. The catalysed reaction is S-ubiquitinyl-[E2 ubiquitin-conjugating enzyme]-L-cysteine + [acceptor protein]-L-lysine = [E2 ubiquitin-conjugating enzyme]-L-cysteine + N(6)-ubiquitinyl-[acceptor protein]-L-lysine.. Its pathway is protein modification; protein ubiquitination. E3 ubiquitin-protein ligase which may be involved in endosomal trafficking. E3 ubiquitin ligases accept ubiquitin from an E2 ubiquitin-conjugating enzyme in the form of a thioester and then directly transfer the ubiquitin to targeted substrates. This is E3 ubiquitin-protein ligase MARCHF3 (Marchf3) from Rattus norvegicus (Rat).